The primary structure comprises 207 residues: Calcipressin-like protein (207 aa).

Positions 176–181 (PAIIVH) are required for tax-6 interaction.

Belongs to the RCAN family. In terms of assembly, interacts with tax-6 (via catalytic domain); the interaction is calcium-dependent. Expressed in lateral hypodermal cells, marginal cells of the pharynx, vulva epithelial cells, ventral and dorsal nerve cords and commissures and various neurons in the anterior and posterior regions. Expressed in male tail structures including the diagonal muscles, sensory rays and spicules. Expressed in PHC neurons and most tail neurons and support cells of the phasmid neurons. Also expressed in pharyngeal muscle, head neurons, excretory canal cells and hypodermal seam cells.

In terms of biological role, inhibits tax-6/calcineurin A phosphatase activity and thereby negatively regulates calcineurin-mediated functions. Plays a role in modulating temperature-dependent calcium responses in AFD neurons and in addition, also negatively regulates thermotaxis in a tax-6-dependent manner in AFD neurons. In response to changes in intracellular calcium levels may also regulate nuclear translocation of transcriptional regulators such as crtc-1. May play a role in regulating body size. Plays a role in male tail tip morphogenesis. This Caenorhabditis elegans protein is Calcipressin-like protein.